The primary structure comprises 122 residues: Large ribosomal subunit protein uL18 (122 aa).

The protein belongs to the universal ribosomal protein uL18 family. Part of the 50S ribosomal subunit; part of the 5S rRNA/L5/L18/L25 subcomplex. Contacts the 5S and 23S rRNAs.

Its function is as follows. This is one of the proteins that bind and probably mediate the attachment of the 5S RNA into the large ribosomal subunit, where it forms part of the central protuberance. This is Large ribosomal subunit protein uL18 from Leptospira biflexa serovar Patoc (strain Patoc 1 / Ames).